The chain runs to 142 residues: Hemoglobin subunit alpha-1/2 (142 aa).

One can recognise a Globin domain in the interval 2–142 (VLSADDKTNI…VSTVLTSKYR (141 aa)). Serine 4 is modified (phosphoserine). Residue lysine 8 is modified to N6-succinyllysine. Threonine 9 bears the Phosphothreonine mark. An N6-succinyllysine modification is found at lysine 12. Residue lysine 17 is modified to N6-acetyllysine; alternate. N6-succinyllysine; alternate is present on lysine 17. A Phosphotyrosine modification is found at tyrosine 25. Lysine 41 carries the post-translational modification N6-succinyllysine. Serine 50 bears the Phosphoserine mark. Histidine 59 is an O2 binding site. Residue histidine 88 participates in heme b binding. Serine 103 is subject to Phosphoserine. A Phosphothreonine modification is found at threonine 109. A phosphoserine mark is found at serine 125 and serine 132. A phosphothreonine mark is found at threonine 135 and threonine 138. At serine 139 the chain carries Phosphoserine.

This sequence belongs to the globin family. Heterotetramer of two alpha chains and two beta chains. Red blood cells.

Its function is as follows. Involved in oxygen transport from the lung to the various peripheral tissues. Hemopressin acts as an antagonist peptide of the cannabinoid receptor CNR1. Hemopressin-binding efficiently blocks cannabinoid receptor CNR1 and subsequent signaling. This Rattus norvegicus (Rat) protein is Hemoglobin subunit alpha-1/2 (Hba1).